A 212-amino-acid chain; its full sequence is Putative tyrosine-protein phosphatase R622 (212 aa).

In terms of domain architecture, Tyrosine-protein phosphatase spans lysine 9–asparagine 191. Cysteine 135 acts as the Phosphocysteine intermediate in catalysis.

Belongs to the protein-tyrosine phosphatase family. Non-receptor class dual specificity subfamily.

The catalysed reaction is O-phospho-L-tyrosyl-[protein] + H2O = L-tyrosyl-[protein] + phosphate. This Acanthamoeba polyphaga mimivirus (APMV) protein is Putative tyrosine-protein phosphatase R622.